The following is a 384-amino-acid chain: Succinyl-diaminopimelate desuccinylase (384 aa).

Histidine 73 is a Zn(2+) binding site. Aspartate 75 is a catalytic residue. Position 106 (aspartate 106) interacts with Zn(2+). Glutamate 140 serves as the catalytic Proton acceptor. Zn(2+)-binding residues include glutamate 141, glutamate 169, and histidine 358.

This sequence belongs to the peptidase M20A family. DapE subfamily. As to quaternary structure, homodimer. The cofactor is Zn(2+). Co(2+) serves as cofactor.

The catalysed reaction is N-succinyl-(2S,6S)-2,6-diaminopimelate + H2O = (2S,6S)-2,6-diaminopimelate + succinate. Its pathway is amino-acid biosynthesis; L-lysine biosynthesis via DAP pathway; LL-2,6-diaminopimelate from (S)-tetrahydrodipicolinate (succinylase route): step 3/3. In terms of biological role, catalyzes the hydrolysis of N-succinyl-L,L-diaminopimelic acid (SDAP), forming succinate and LL-2,6-diaminopimelate (DAP), an intermediate involved in the bacterial biosynthesis of lysine and meso-diaminopimelic acid, an essential component of bacterial cell walls. This is Succinyl-diaminopimelate desuccinylase from Pelagibacter ubique (strain HTCC1062).